The sequence spans 352 residues: C-X-C chemokine receptor type 4 (352 aa).

The segment at 1–21 (MEGISIYTSDNYTEEMGSGDY) is important for chemokine binding and signaling. Topologically, residues 1-38 (MEGISIYTSDNYTEEMGSGDYDSIKEPCFREKNAHFNR) are extracellular. Residue tyrosine 7 is modified to Sulfotyrosine. A glycan (N-linked (GlcNAc...) asparagine) is linked at asparagine 11. A Sulfotyrosine modification is found at tyrosine 12. Serine 18 is a glycosylation site (O-linked (Xyl...) (chondroitin sulfate) serine). At tyrosine 21 the chain carries Sulfotyrosine. Cystine bridges form between cysteine 28–cysteine 274 and cysteine 109–cysteine 186. A helical transmembrane segment spans residues 39–63 (IFLPTIYSIIFLTGIVGNGLVILVM). Over 64–77 (GYQKKLRSMTDKYR) the chain is Cytoplasmic. The chain crosses the membrane as a helical span at residues 78–99 (LHLSVADLLFVITLPFWAVDAV). The segment at 94–97 (WAVD) is chemokine binding. The Extracellular portion of the chain corresponds to 100–110 (ANWYFGNFLCK). A helical transmembrane segment spans residues 111–130 (AVHVIYTVNLYSSVLILAFI). Positions 113–117 (HVIYT) are chemokine binding. Over 131–154 (SLDRYLAIVHATNSQKPRKLLAEK) the chain is Cytoplasmic. Positions 133-135 (DRY) match the Important for signaling motif. The involved in dimerization; when bound to chemokine stretch occupies residues 135-147 (YLAIVHATNSQKP). A helical transmembrane segment spans residues 155-174 (VVYVGVWIPALLLTIPGFIF). Residues 175 to 195 (ASVSEADDRFICDRFYPNDLW) are Extracellular-facing. Positions 186-190 (CDRFY) are chemokine binding, important for signaling. The segment at 191–210 (PNDLWVVVFQFQHIMVGLIL) is involved in dimerization. Residues 196-216 (VVVFQFQHIMVGLILPGIVIL) form a helical membrane-spanning segment. The Cytoplasmic segment spans residues 217 to 241 (SCYCIIISKLSHSKGHQKRKALKTT). Residues 242 to 261 (VILILAFFACWLPYYIGISI) form a helical membrane-spanning segment. Residues 262–282 (DSFILLEIIKQGCEFENTVHK) lie on the Extracellular side of the membrane. The segment at 266–268 (LLE) is involved in dimerization. The helical transmembrane segment at 283–302 (WISITEALAFFHCCLNPILY) threads the bilayer. The Cytoplasmic portion of the chain corresponds to 303-352 (AFLGAKFKTSAQHALTSVSRGSSLKILSKGKRGGHSSVSTESESSSFHSS). A phosphoserine mark is found at serine 319 and serine 321. Phosphoserine; by PKC and GRK6 is present on residues serine 324 and serine 325. Residues 329 to 352 (LSKGKRGGHSSVSTESESSSFHSS) form a disordered region. Phosphoserine; by GRK6 is present on serine 330. Lysine 331 participates in a covalent cross-link: Glycyl lysine isopeptide (Lys-Gly) (interchain with G-Cter in ubiquitin). Residues 337 to 352 (HSSVSTESESSSFHSS) are compositionally biased toward low complexity. Serine 339 is modified (phosphoserine; by GRK6). Phosphoserine occurs at positions 348 and 351.

This sequence belongs to the G-protein coupled receptor 1 family. Monomer. Can form homodimers. Interacts with CD164. Interacts with ARRB2; the interaction is dependent on the C-terminal phosphorylation of CXCR4 and allows activation of MAPK1 and MAPK3. Interacts with ARR3; the interaction is dependent on the C-terminal phosphorylation of CXCR4 and modulates calcium mobilization. Interacts with RNF113A; the interaction, enhanced by CXCL12, promotes CXCR4 ubiquitination and subsequent degradation. Interacts (via the cytoplasmic C-terminal) with ITCH (via the WW domains I and II); the interaction, enhanced by CXCL12, promotes CXCR4 ubiquitination and leads to its degradation. Interacts with extracellular ubiquitin. Interacts with DBN1; this interaction is enhanced by antigenic stimulation. Following LPS binding, may form a complex with GDF5, HSP90AA1 and HSPA8. Phosphorylated on agonist stimulation. Rapidly phosphorylated on serine and threonine residues in the C-terminal. Phosphorylation at Ser-324 and Ser-325 leads to recruitment of ITCH, ubiquitination and protein degradation. Post-translationally, ubiquitinated after ligand binding, leading to its degradation. Ubiquitinated by ITCH at the cell membrane on agonist stimulation. The ubiquitin-dependent mechanism, endosomal sorting complex required for transport (ESCRT), then targets CXCR4 for lysosomal degradation. This process is dependent also on prior Ser-/Thr-phosphorylation in the C-terminal of CXCR4. Also binding of ARRB1 to STAM negatively regulates CXCR4 sorting to lysosomes though modulating ubiquitination of SFR5S. In terms of processing, sulfation is required for efficient binding of CXCL12/SDF-1alpha and promotes its dimerization. O- and N-glycosylated. N-glycosylation can mask coreceptor function. The O-glycosylation chondroitin sulfate attachment does not affect interaction with CXCL12/SDF-1alpha nor its coreceptor activity.

The protein resides in the cell membrane. It is found in the cell junction. Its subcellular location is the early endosome. It localises to the late endosome. The protein localises to the lysosome. In terms of biological role, receptor for the C-X-C chemokine CXCL12/SDF-1 that transduces a signal by increasing intracellular calcium ion levels and enhancing MAPK1/MAPK3 activation. Involved in the AKT signaling cascade. Plays a role in regulation of cell migration, e.g. during wound healing. Acts as a receptor for extracellular ubiquitin; leading to enhanced intracellular calcium ions and reduced cellular cAMP levels. Binds bacterial lipopolysaccharide (LPS) et mediates LPS-induced inflammatory response, including TNF secretion by monocytes. Involved in hematopoiesis and in cardiac ventricular septum formation. Also plays an essential role in vascularization of the gastrointestinal tract, probably by regulating vascular branching and/or remodeling processes in endothelial cells. Involved in cerebellar development. In the CNS, could mediate hippocampal-neuron survival. The chain is C-X-C chemokine receptor type 4 (CXCR4) from Cercocebus atys (Sooty mangabey).